Here is a 106-residue protein sequence, read N- to C-terminus: RxLR effector protein PSR1 (106 aa).

The first 20 residues, 1-20 (MRLTYVLLVAVTTLLVSCDA), serve as a signal peptide directing secretion. A RxLR-dEER motif is present at residues 33–46 (RLLRFVEAADEEER). The segment at 50-106 (FSPEKLRKMLGDETYRLKKFGKWDSDGHTFDGLKHYLLLSDSSMVKLRNMYKAWLEQ) is WY domain. Positions 56–69 (RKMLGDETYRLKKF) match the Bipartite nuclear localization signal (NLS) motif.

This sequence belongs to the RxLR effector family. In terms of assembly, interacts with host PINP1.

The protein resides in the secreted. It is found in the host nucleus. Its function is as follows. Secreted effector that possesses RNA silencing suppression activity by inhibiting the biogenesis of small RNAs in the host plant to promote enhanced susceptibility of host to the pathogen during infection. Interferes with secondary siRNA production by associating with host nuclear protein PINP1 that acts as a regulator of the accumulation of both microRNAs and endogenous small interfering RNAs. The polypeptide is RxLR effector protein PSR1 (Phytophthora sojae (Soybean stem and root rot agent)).